Reading from the N-terminus, the 544-residue chain is CTP synthase (544 aa).

Positions 1 to 265 are amidoligase domain; sequence MARFIFITGG…DKAVLSAFGL (265 aa). Ser-13 contributes to the CTP binding site. Ser-13 provides a ligand contact to UTP. 14–19 provides a ligand contact to ATP; it reads SLGKGL. Tyr-54 serves as a coordination point for L-glutamine. Asp-71 serves as a coordination point for ATP. Mg(2+) contacts are provided by Asp-71 and Glu-139. CTP-binding positions include 146–148, 186–191, and Lys-222; these read DIE and KTKPTQ. UTP-binding positions include 186–191 and Lys-222; that span reads KTKPTQ. A Glutamine amidotransferase type-1 domain is found at 291–543; it reads TIGVVGKYVG…VAAALKQSRL (253 aa). Position 355 (Gly-355) interacts with L-glutamine. The active-site Nucleophile; for glutamine hydrolysis is the Cys-382. L-glutamine is bound by residues 383 to 386, Glu-406, and Arg-471; that span reads LGMQ. Active-site residues include His-516 and Glu-518.

It belongs to the CTP synthase family. As to quaternary structure, homotetramer.

The catalysed reaction is UTP + L-glutamine + ATP + H2O = CTP + L-glutamate + ADP + phosphate + 2 H(+). It carries out the reaction L-glutamine + H2O = L-glutamate + NH4(+). It catalyses the reaction UTP + NH4(+) + ATP = CTP + ADP + phosphate + 2 H(+). Its pathway is pyrimidine metabolism; CTP biosynthesis via de novo pathway; CTP from UDP: step 2/2. Allosterically activated by GTP, when glutamine is the substrate; GTP has no effect on the reaction when ammonia is the substrate. The allosteric effector GTP functions by stabilizing the protein conformation that binds the tetrahedral intermediate(s) formed during glutamine hydrolysis. Inhibited by the product CTP, via allosteric rather than competitive inhibition. Its function is as follows. Catalyzes the ATP-dependent amination of UTP to CTP with either L-glutamine or ammonia as the source of nitrogen. Regulates intracellular CTP levels through interactions with the four ribonucleotide triphosphates. The sequence is that of CTP synthase from Zymomonas mobilis subsp. mobilis (strain ATCC 31821 / ZM4 / CP4).